Reading from the N-terminus, the 304-residue chain is Protoheme IX farnesyltransferase (304 aa).

9 consecutive transmembrane segments (helical) span residues 31–51 (VNTL…PDGL), 58–78 (VAAT…NCLI), 99–119 (LAPA…LTVL), 126–146 (LTMW…TVLL), 154–174 (IVIG…AVTG), 180–200 (ALLL…ALAL), 222–242 (FTRL…LLPF), 243–263 (ATRM…IGFL), and 284–304 (FSIL…YLPL).

Belongs to the UbiA prenyltransferase family. Protoheme IX farnesyltransferase subfamily.

It localises to the cell inner membrane. The catalysed reaction is heme b + (2E,6E)-farnesyl diphosphate + H2O = Fe(II)-heme o + diphosphate. It functions in the pathway porphyrin-containing compound metabolism; heme O biosynthesis; heme O from protoheme: step 1/1. Functionally, converts heme B (protoheme IX) to heme O by substitution of the vinyl group on carbon 2 of heme B porphyrin ring with a hydroxyethyl farnesyl side group. The sequence is that of Protoheme IX farnesyltransferase from Aromatoleum aromaticum (strain DSM 19018 / LMG 30748 / EbN1) (Azoarcus sp. (strain EbN1)).